Consider the following 174-residue polypeptide: Endoribonuclease YbeY (174 aa).

3 residues coordinate Zn(2+): H129, H133, and H139.

It belongs to the endoribonuclease YbeY family. The cofactor is Zn(2+).

The protein localises to the cytoplasm. Functionally, single strand-specific metallo-endoribonuclease involved in late-stage 70S ribosome quality control and in maturation of the 3' terminus of the 16S rRNA. This Lactobacillus helveticus (strain DPC 4571) protein is Endoribonuclease YbeY.